The primary structure comprises 447 residues: tRNA-2-methylthio-N(6)-dimethylallyladenosine synthase (447 aa).

An MTTase N-terminal domain is found at 8–126; the sequence is KKVVTLAYGC…FQRLLEEAEE (119 aa). Residues C17, C53, C87, C162, C166, and C169 each contribute to the [4Fe-4S] cluster site. In terms of domain architecture, Radical SAM core spans 148–378; it reads AKGKLKAYVN…ITVQNAQSLA (231 aa). Positions 381–444 constitute a TRAM domain; that stretch reads QEMIGKTCEV…SWTLFGECRA (64 aa).

The protein belongs to the methylthiotransferase family. MiaB subfamily. As to quaternary structure, monomer. The cofactor is [4Fe-4S] cluster.

It localises to the cytoplasm. It catalyses the reaction N(6)-dimethylallyladenosine(37) in tRNA + (sulfur carrier)-SH + AH2 + 2 S-adenosyl-L-methionine = 2-methylsulfanyl-N(6)-dimethylallyladenosine(37) in tRNA + (sulfur carrier)-H + 5'-deoxyadenosine + L-methionine + A + S-adenosyl-L-homocysteine + 2 H(+). Functionally, catalyzes the methylthiolation of N6-(dimethylallyl)adenosine (i(6)A), leading to the formation of 2-methylthio-N6-(dimethylallyl)adenosine (ms(2)i(6)A) at position 37 in tRNAs that read codons beginning with uridine. In Desulfitobacterium hafniense (strain Y51), this protein is tRNA-2-methylthio-N(6)-dimethylallyladenosine synthase.